The primary structure comprises 87 residues: Small ribosomal subunit protein uS17 (87 aa).

It belongs to the universal ribosomal protein uS17 family. In terms of assembly, part of the 30S ribosomal subunit.

Functionally, one of the primary rRNA binding proteins, it binds specifically to the 5'-end of 16S ribosomal RNA. In Anoxybacillus flavithermus (strain DSM 21510 / WK1), this protein is Small ribosomal subunit protein uS17.